Consider the following 288-residue polypeptide: Bifunctional protein FolD (288 aa).

NADP(+) is bound by residues 166–168 and I232; that span reads GAS.

This sequence belongs to the tetrahydrofolate dehydrogenase/cyclohydrolase family. In terms of assembly, homodimer.

It carries out the reaction (6R)-5,10-methylene-5,6,7,8-tetrahydrofolate + NADP(+) = (6R)-5,10-methenyltetrahydrofolate + NADPH. The enzyme catalyses (6R)-5,10-methenyltetrahydrofolate + H2O = (6R)-10-formyltetrahydrofolate + H(+). The protein operates within one-carbon metabolism; tetrahydrofolate interconversion. Its function is as follows. Catalyzes the oxidation of 5,10-methylenetetrahydrofolate to 5,10-methenyltetrahydrofolate and then the hydrolysis of 5,10-methenyltetrahydrofolate to 10-formyltetrahydrofolate. The polypeptide is Bifunctional protein FolD (Yersinia pseudotuberculosis serotype O:1b (strain IP 31758)).